We begin with the raw amino-acid sequence, 100 residues long: UPF0235 protein Cvib_0403 (100 aa).

This sequence belongs to the UPF0235 family.

The sequence is that of UPF0235 protein Cvib_0403 from Chlorobium phaeovibrioides (strain DSM 265 / 1930) (Prosthecochloris vibrioformis (strain DSM 265)).